We begin with the raw amino-acid sequence, 347 residues long: N-acetyl-gamma-glutamyl-phosphate reductase (347 aa).

Cys-153 is an active-site residue.

Belongs to the NAGSA dehydrogenase family. Type 1 subfamily.

It is found in the cytoplasm. It catalyses the reaction N-acetyl-L-glutamate 5-semialdehyde + phosphate + NADP(+) = N-acetyl-L-glutamyl 5-phosphate + NADPH + H(+). Its pathway is amino-acid biosynthesis; L-arginine biosynthesis; N(2)-acetyl-L-ornithine from L-glutamate: step 3/4. Its function is as follows. Catalyzes the NADPH-dependent reduction of N-acetyl-5-glutamyl phosphate to yield N-acetyl-L-glutamate 5-semialdehyde. The chain is N-acetyl-gamma-glutamyl-phosphate reductase from Mycobacterium leprae (strain Br4923).